A 334-amino-acid chain; its full sequence is Glutaredoxin-3 (334 aa).

An N-acetylalanine modification is found at Ala2. The region spanning 2–116 is the Thioredoxin domain; sequence AGGAAEAAAA…LTKKVQRHAS (115 aa). The disordered stretch occupies residues 110–131; sequence KVQRHASSGSFSPSGSEHPKED. 2 positions are modified to phosphoserine: Ser116 and Ser119. The segment covering 116–125 has biased composition (low complexity); it reads SSGSFSPSGS. Glutaredoxin domains follow at residues 145–235 and 236–334; these read CMLF…PKLE and ERLK…KGEN. 2 residues coordinate [2Fe-2S] cluster: Cys158 and Cys260.

As to quaternary structure, homodimer; the homodimer is independent of 2Fe-2S clusters. Heterotrimer; forms a heterotrimeric complex composed by two BOLA2 molecules and one GLRX3 molecule; linked by [2Fe-2S] clusters. Interacts (via N-terminus) with PRKCQ/PKC-theta. Interacts (via C-terminus) with CSRP3. Interacts with CSRP2.

It localises to the cytoplasm. The protein localises to the cytosol. It is found in the cell cortex. Its subcellular location is the myofibril. The protein resides in the sarcomere. It localises to the z line. Together with BOLA2, acts as a cytosolic iron-sulfur (Fe-S) cluster assembly factor that facilitates [2Fe-2S] cluster insertion into a subset of cytosolic proteins. Acts as a critical negative regulator of cardiac hypertrophy and a positive inotropic regulator. Required for hemoglobin maturation. Does not possess any thyoredoxin activity since it lacks the conserved motif that is essential for catalytic activity. The protein is Glutaredoxin-3 (GLRX3) of Bos taurus (Bovine).